We begin with the raw amino-acid sequence, 84 residues long: Putative ribosomal RNA large subunit methyltransferase H 2 (84 aa).

S-adenosyl-L-methionine is bound by residues glycine 33 and phenylalanine 52–phenylalanine 57.

The protein belongs to the RNA methyltransferase RlmH family. Homodimer.

Its subcellular location is the cytoplasm. The enzyme catalyses pseudouridine(1915) in 23S rRNA + S-adenosyl-L-methionine = N(3)-methylpseudouridine(1915) in 23S rRNA + S-adenosyl-L-homocysteine + H(+). Functionally, specifically methylates the pseudouridine at position 1915 (m3Psi1915) in 23S rRNA. This chain is Putative ribosomal RNA large subunit methyltransferase H 2 (rlmH2), found in Clostridium perfringens (strain SM101 / Type A).